The following is a 122-amino-acid chain: Large ribosomal subunit protein uL14 (122 aa).

This sequence belongs to the universal ribosomal protein uL14 family. Part of the 50S ribosomal subunit. Forms a cluster with proteins L3 and L19. In the 70S ribosome, L14 and L19 interact and together make contacts with the 16S rRNA in bridges B5 and B8.

Binds to 23S rRNA. Forms part of two intersubunit bridges in the 70S ribosome. The polypeptide is Large ribosomal subunit protein uL14 (Helicobacter pylori (strain J99 / ATCC 700824) (Campylobacter pylori J99)).